The primary structure comprises 107 residues: U1-lycotoxin-Ls1b (107 aa).

Positions 1 to 20 (MMKVLVVVALLPTLISYSSS) are cleaved as a signal peptide. A propeptide spanning residues 21–41 (EGIDDLEADELLSLMANEQTR) is cleaved from the precursor. Disulfide bonds link Cys44–Cys59, Cys51–Cys68, Cys58–Cys86, and Cys70–Cys84.

The protein belongs to the neurotoxin 19 (CSTX) family. 04 (U1-Lctx) subfamily. As to expression, expressed by the venom gland.

It localises to the secreted. The sequence is that of U1-lycotoxin-Ls1b from Lycosa singoriensis (Wolf spider).